The chain runs to 189 residues: Molybdenum cofactor guanylyltransferase (189 aa).

Residues 10–12 (LAG), lysine 23, asparagine 51, aspartate 69, and aspartate 99 each bind GTP. Aspartate 99 is a binding site for Mg(2+).

This sequence belongs to the MobA family. As to quaternary structure, monomer. It depends on Mg(2+) as a cofactor.

It is found in the cytoplasm. The catalysed reaction is Mo-molybdopterin + GTP + H(+) = Mo-molybdopterin guanine dinucleotide + diphosphate. In terms of biological role, transfers a GMP moiety from GTP to Mo-molybdopterin (Mo-MPT) cofactor (Moco or molybdenum cofactor) to form Mo-molybdopterin guanine dinucleotide (Mo-MGD) cofactor. The protein is Molybdenum cofactor guanylyltransferase of Pasteurella multocida (strain Pm70).